Here is a 496-residue protein sequence, read N- to C-terminus: Glycylpeptide N-tetradecanoyltransferase 1 (496 aa).

Residues 1-81 (MADESETAVK…DSTQDQPVKM (81 aa)) are disordered. A phosphoserine mark is found at Ser-31 and Ser-47. Residues 55–66 (KKKKKKQKKKKE) are compositionally biased toward basic residues. Position 83 is a phosphoserine (Ser-83). Tetradecanoyl-CoA-binding residues include Gln-118, Phe-119, Trp-120, Phe-247, Leu-248, Cys-249, Val-250, Ser-256, Arg-258, Val-259, and Ala-260.

The protein belongs to the NMT family.

It localises to the cytoplasm. The protein resides in the cytosol. Its subcellular location is the membrane. The catalysed reaction is N-terminal glycyl-[protein] + tetradecanoyl-CoA = N-tetradecanoylglycyl-[protein] + CoA + H(+). The enzyme catalyses N-terminal glycyl-L-lysyl-[protein] + tetradecanoyl-CoA = N-terminal glycyl-(N(6)-tetradecanoyl)-L-lysyl-[protein] + CoA + H(+). Adds a myristoyl group to the N-terminal glycine residue of certain cellular and viral proteins. Also able to mediate N-terminal lysine myristoylation of proteins: catalyzes myristoylation of ARF6 on both 'Gly-2' and 'Lys-3'. Lysine myristoylation is required to maintain ARF6 on membranes during the GTPase cycle. The polypeptide is Glycylpeptide N-tetradecanoyltransferase 1 (Nmt1) (Rattus norvegicus (Rat)).